Consider the following 257-residue polypeptide: Phosphate import ATP-binding protein PstB (257 aa).

In terms of domain architecture, ABC transporter spans Leu5–Glu246. Residue Gly37–Ser44 participates in ATP binding.

Belongs to the ABC transporter superfamily. Phosphate importer (TC 3.A.1.7) family. The complex is composed of two ATP-binding proteins (PstB), two transmembrane proteins (PstC and PstA) and a solute-binding protein (PstS).

It localises to the cell membrane. It catalyses the reaction phosphate(out) + ATP + H2O = ADP + 2 phosphate(in) + H(+). Functionally, part of the ABC transporter complex PstSACB involved in phosphate import. Responsible for energy coupling to the transport system. This chain is Phosphate import ATP-binding protein PstB, found in Tropheryma whipplei (strain Twist) (Whipple's bacillus).